The chain runs to 623 residues: Kelch repeat and BTB domain-containing protein 12 (623 aa).

The BTB domain maps to T25–A92. The BACK domain occupies C127 to K236. 4 Kelch repeats span residues N390–G440, R441–G496, I498–A551, and K557–N607.

The polypeptide is Kelch repeat and BTB domain-containing protein 12 (kbtbd12) (Danio rerio (Zebrafish)).